We begin with the raw amino-acid sequence, 500 residues long: Cytochrome P450 71B36 (500 aa).

Residues 1–21 (MATILFLSLLFLSCILLAAFT) traverse the membrane as a helical segment. Heme is bound at residue Cys440.

This sequence belongs to the cytochrome P450 family. It depends on heme as a cofactor.

The protein localises to the membrane. The sequence is that of Cytochrome P450 71B36 (CYP71B36) from Arabidopsis thaliana (Mouse-ear cress).